Consider the following 276-residue polypeptide: Large ribosomal subunit protein uL2 (276 aa).

Disordered stretches follow at residues 1–20 (MGIK…TTND) and 219–276 (TVRG…RRKK). Residues 7–20 (NPTTNGRRNMTTND) are compositionally biased toward polar residues.

The protein belongs to the universal ribosomal protein uL2 family. As to quaternary structure, part of the 50S ribosomal subunit. Forms a bridge to the 30S subunit in the 70S ribosome.

Functionally, one of the primary rRNA binding proteins. Required for association of the 30S and 50S subunits to form the 70S ribosome, for tRNA binding and peptide bond formation. It has been suggested to have peptidyltransferase activity; this is somewhat controversial. Makes several contacts with the 16S rRNA in the 70S ribosome. The polypeptide is Large ribosomal subunit protein uL2 (Bacillus anthracis (strain A0248)).